We begin with the raw amino-acid sequence, 988 residues long: MDGFAGSLDDSISAASTSDVQDRLSALESRVQQQEDEITVLKAALADVLRRLAISEDHVASVKKSMPSKGQPSLREAISMSCITNGSGISRKQNHTSSVSIARKETLSSAAKSGTEKKKEKPQGQREKKEDSHSNDQSPQIRASPSPQPSSQPLQINRQTPESKSSAPIKSIKRPPTAEKSHNSWENSDDSRNKLMKTVSTSKLISKVIKNADKHKDVIVNQAKMSTREKNSQEGEYIKMFMRGRPITMFIPSDVDNYDDIRTELPPEKLKLEWVYGYRGKDCRANVYLLPTGEIVYFIASVVVLFNYEERTQRHYLGHTDCVRCLAVHPDKIRIATGQIAGVDKDGRPLQPHVRVWDSVSLTTLHVIGLGTFERGVGCLDFSKADSGVHLCVIDDSNEHMLTVWDWQKKSKIAEIKTTNEVVLAVEFHPTDANTIITCGKSHIFFWTWSGNSLTRKQGIFGKYEKPKFVQCLAFLGNGDVLTGDSGGVMLIWSKTMVEPPPGKGPKGVYQINRQIKAHDGSVFTLCQMRNGMLLTGGGKDRKIILWDHDLNLEREIEVPDQYGTIRAVAEGRAEQFLVGTSRNFILRGTFNDGFQIEVQGHRDELWGLATHPFKDLLLTCAQDRQVCMWNSVEHRLEWTRLVDEPGHCADFHPSGTVVAIGTHSGRWFVLDAETRDLVSIHTDGNEQLSVMRYSVDGTLLAVGSHDNFIYLYTVLENGRKYSRYGKCTGHSSYITHLDWSPDNKHIMSNSGDYEILYWDIENGCKLIRNRSDCKDIDWTTYTCVLGFQVFGVWPEGSDGTDINALVRSHNRRVIAVADDFCKVHLFQYPCSKAKAPSHKYSAHSSHVTNVSFTHNDSHLISTGGKDMSIIQWKLVEKLPVPQNEVITDASVTKTPASSSETARPSNSPPLPPSLPLTGTAEEESRMGSSPTLVENSLEQIAEPSEEQSEWGSEDLGVVIDEEPASELSETQGATELPEEERGITPLC.

Met-1 bears the N-acetylmethionine mark. The segment at Met-1–Asp-260 is microtubule-binding. Residues Ser-7, Ser-13, Ser-16, Ser-61, and Ser-79 each carry the phosphoserine modification. Residues Ala-14 to Lys-63 adopt a coiled-coil conformation. Thr-96 carries the phosphothreonine modification. Positions Thr-106–Lys-194 are disordered. The segment covering Gly-114–Ser-134 has biased composition (basic and acidic residues). Ser-134 carries the phosphoserine; by NEK7 modification. The segment covering Gln-137–Gln-155 has biased composition (low complexity). Ser-144 carries the post-translational modification Phosphoserine; by NEK6. Ser-146 bears the Phosphoserine; by NEK7 mark. The span at Ile-156–Pro-168 shows a compositional bias: polar residues. Ser-171 is subject to Phosphoserine. Positions Pro-176–Asn-193 are enriched in basic and acidic residues. A Phosphoserine modification is found at Ser-200. At Thr-201 the chain carries Phosphothreonine. Tyr-237 is modified (phosphotyrosine). Thr-248 is subject to Phosphothreonine. WD repeat units lie at residues Leu-270–Tyr-308, Thr-312–Ser-359, Val-367–Trp-407, Ala-414–Trp-449, Arg-456–Lys-495, Gln-511–His-549, Glu-554–Thr-590, Asp-593–Ser-632, Arg-636–Ala-673, Val-679–Val-715, Tyr-722–Ile-761, Arg-771–Tyr-829, and Ala-836–Leu-875. A Phosphothreonine; by NEK6 and NEK7 modification is found at Thr-620. The tract at residues Ile-887–Cys-988 is disordered. Positions Ala-890–Arg-904 are enriched in polar residues. Phosphoserine occurs at positions 906, 908, and 914. Positions Met-927–Glu-939 are enriched in polar residues. A compositionally biased stretch (acidic residues) spans Pro-944–Ser-953.

The protein belongs to the WD repeat EMAP family. In terms of assembly, homotrimer; self-association is mediated by the N-terminal coiled coil. Interacts (via WD repeats) with NUDC. Interacts with alpha- and beta-tubulin during mitosis. Post-translationally, phosphorylated during mitosis. Phosphorylation at Ser-144 and Ser-146 promotes its dissociation from microtubules during mitosis which is required for efficient chromosome congression.

The protein resides in the cytoplasm. The protein localises to the cytoskeleton. It localises to the spindle. It is found in the microtubule organizing center. Its subcellular location is the midbody. Functionally, essential for the stability of microtubules (MTs). Essential for the formation of MTs. Required for the organization of the mitotic spindle and for the proper attachment of kinetochores to MTs. Promotes the recruitment of NUDC to the mitotic spindle for mitotic progression. The chain is Echinoderm microtubule-associated protein-like 4 (Eml4) from Mus musculus (Mouse).